Reading from the N-terminus, the 168-residue chain is Putative flavin-containing monooxygenase FMO GS-OX-like 11 (168 aa).

Residue 17–22 participates in FAD binding; sequence GAGAAG.

The protein belongs to the FMO family. The cofactor is FAD.

Functionally, catalyzes the conversion of methylthioalkyl glucosinolates of any chain length into methylsulfinylalkyl glucosinolates. This Arabidopsis thaliana (Mouse-ear cress) protein is Putative flavin-containing monooxygenase FMO GS-OX-like 11.